A 216-amino-acid chain; its full sequence is Protein shisa-5 (216 aa).

The N-terminal stretch at 1-26 (MAAPAPAPRILVLLLLLLPAPEGAQS) is a signal peptide. The Extracellular segment spans residues 27-93 (ELCMISHGRK…SGFDSDPVAR (67 aa)). A helical membrane pass occupies residues 94–114 (FGTVIAIGVTLFVIAVVTVIV). The Cytoplasmic portion of the chain corresponds to 115–216 (CCTCSCCCLY…AYMEPPKAVP (102 aa)).

It belongs to the shisa family. In terms of assembly, interacts with PDCD6; PDCD6 can stabilize SHISA5.

It is found in the endoplasmic reticulum membrane. The protein resides in the nucleus membrane. In terms of biological role, can induce apoptosis in a caspase-dependent manner and plays a role in p53/TP53-dependent apoptosis. This chain is Protein shisa-5 (SHISA5), found in Bos taurus (Bovine).